Reading from the N-terminus, the 120-residue chain is Small ribosomal subunit protein uS13 (120 aa).

The interval 96–120 (PCRGQRTRTNARTRKGPRKAIAGKK) is disordered.

It belongs to the universal ribosomal protein uS13 family. As to quaternary structure, part of the 30S ribosomal subunit. Forms a loose heterodimer with protein S19. Forms two bridges to the 50S subunit in the 70S ribosome.

Its function is as follows. Located at the top of the head of the 30S subunit, it contacts several helices of the 16S rRNA. In the 70S ribosome it contacts the 23S rRNA (bridge B1a) and protein L5 of the 50S subunit (bridge B1b), connecting the 2 subunits; these bridges are implicated in subunit movement. Contacts the tRNAs in the A and P-sites. The protein is Small ribosomal subunit protein uS13 of Dechloromonas aromatica (strain RCB).